Consider the following 719-residue polypeptide: Developmental regulator flbA (719 aa).

Residues 1-17 (MPTSISTAPLSQGSPPS) are compositionally biased toward polar residues. 3 disordered regions span residues 1–39 (MPTSISTAPLSQGSPPSSLIDYQPQSVPSSSSPPPSTAA), 117–141 (IGSTTNSSLRQSASSGSLQKHSRKA), and 155–190 (LSPPLSDGSGSSEQSSSAPFEPLSAVTEQPNPAAER). Composition is skewed to low complexity over residues 123–135 (SSLRQSASSGSLQ) and 158–171 (PLSDGSGSSEQSSS). The fungal-DR stretch occupies residues 214–411 (QTSSRLLRMT…QDGPNVKSSV (198 aa)). A DEP domain is found at 425-511 (GLVGVKMARE…SKNAIYAITE (87 aa)). Residues 540–685 (SNNARLNHIL…FLRDPKYSAI (146 aa)) form the RGS domain. The tract at residues 694–719 (LIGGGRSYSPTPGNVPERSMSRSQRS) is disordered.

Functionally, required for asexual sporulation and normal colony development. May be involved in brlA activation. Could play a regulatory role in controlling the flug-initiated signal transduction pathway that triggers the asexual reproduction. This is Developmental regulator flbA (flbA) from Emericella nidulans (strain FGSC A4 / ATCC 38163 / CBS 112.46 / NRRL 194 / M139) (Aspergillus nidulans).